The primary structure comprises 162 residues: Protein-export protein SecB (162 aa).

It belongs to the SecB family. Homotetramer, a dimer of dimers. One homotetramer interacts with 1 SecA dimer.

The protein resides in the cytoplasm. In terms of biological role, one of the proteins required for the normal export of preproteins out of the cell cytoplasm. It is a molecular chaperone that binds to a subset of precursor proteins, maintaining them in a translocation-competent state. It also specifically binds to its receptor SecA. This is Protein-export protein SecB from Hamiltonella defensa subsp. Acyrthosiphon pisum (strain 5AT).